We begin with the raw amino-acid sequence, 188 residues long: MRPGVRLAVDVGSVRVGLAACDPAGVIASPVRTLVRDPGHDADVAEIAAEARARGAVEIVLGLPLSLDGSEGPAALRALDYADKIVRSVPEVPVRLVDERLSTVGAHRALHAAGLKEKQFRAVVDQAAAVVLLQATLDAERTGHAPGRVVAGPKGRRKARHRGQGGTGTEQQADAGGRARPHATEGKG.

The disordered stretch occupies residues 144–188; it reads HAPGRVVAGPKGRRKARHRGQGGTGTEQQADAGGRARPHATEGKG. Residues 154–163 are compositionally biased toward basic residues; that stretch reads KGRRKARHRG.

It belongs to the YqgF nuclease family.

The protein resides in the cytoplasm. Its function is as follows. Could be a nuclease involved in processing of the 5'-end of pre-16S rRNA. This Kineococcus radiotolerans (strain ATCC BAA-149 / DSM 14245 / SRS30216) protein is Putative pre-16S rRNA nuclease.